A 410-amino-acid polypeptide reads, in one-letter code: UPF0761 membrane protein Csal_1895 (410 aa).

6 consecutive transmembrane segments (helical) span residues 43–63, 99–119, 139–159, 180–200, 212–232, and 247–267; these read LFAV…IPSF, SLTL…MVTV, FLLY…GFLL, VAFL…FIYM, AVAG…AFSL, and FAAV…VLVG.

The protein belongs to the UPF0761 family.

The protein localises to the cell inner membrane. This chain is UPF0761 membrane protein Csal_1895, found in Chromohalobacter salexigens (strain ATCC BAA-138 / DSM 3043 / CIP 106854 / NCIMB 13768 / 1H11).